A 325-amino-acid polypeptide reads, in one-letter code: Neisseria adhesin A (325 aa).

The first 23 residues, 1 to 23 (MKHFQSKVLTAAILAALSGSAMA), serve as a signal peptide directing secretion. The tract at residues 24-137 (DNPPPSTDEI…NTAAIGENKA (114 aa)) is head domain. Positions 86–135 (LKEVLAQHDQSLADLTGTVDENSEALVKTAEVVNDISADVKANTAAIGEN) form a coiled coil. Residues 139–231 (IAKKADQTAL…LASAEKSITE (93 aa)) are coiled stalk domain. An outer membrane translocation of the passenger domain region spans residues 232–270 (HGTRLNGLDRTVSDLRKETRQGLAEQAALSGLFQPYNVG). 4 consecutive transmembrane segments (beta stranded) span residues 270 to 280 (GRFNVTAAVGG), 284 to 295 (ESAVAIGTGFRF), 302 to 308 (KAGVAVG), and 314 to 325 (SAAYHVGVNYEW). Residues 271 to 325 (RFNVTAAVGGYKSESAVAIGTGFRFTENFAAKAGVAVGTSSGSSAAYHVGVNYEW) form a translocator domain region.

It belongs to the autotransporter-2 (AT-2) (TC 1.B.40) family. As to quaternary structure, homotrimer.

It localises to the cell surface. The protein localises to the cell outer membrane. Functionally, an antigenic bacterial cell surface protein that adheres to and induces bacterial uptake by human epithelial cells. The polypeptide is Neisseria adhesin A (Neisseria meningitidis serogroup B).